Reading from the N-terminus, the 212-residue chain is Phosphoribosylglycinamide formyltransferase (212 aa).

A N(1)-(5-phospho-beta-D-ribosyl)glycinamide-binding site is contributed by 12–14; sequence GTN. (6R)-10-formyltetrahydrofolate contacts are provided by residues 90-93 and Asn-107; that span reads MKIL. His-109 serves as the catalytic Proton donor.

Belongs to the GART family.

The enzyme catalyses N(1)-(5-phospho-beta-D-ribosyl)glycinamide + (6R)-10-formyltetrahydrofolate = N(2)-formyl-N(1)-(5-phospho-beta-D-ribosyl)glycinamide + (6S)-5,6,7,8-tetrahydrofolate + H(+). It functions in the pathway purine metabolism; IMP biosynthesis via de novo pathway; N(2)-formyl-N(1)-(5-phospho-D-ribosyl)glycinamide from N(1)-(5-phospho-D-ribosyl)glycinamide (10-formyl THF route): step 1/1. Its function is as follows. Catalyzes the transfer of a formyl group from 10-formyltetrahydrofolate to 5-phospho-ribosyl-glycinamide (GAR), producing 5-phospho-ribosyl-N-formylglycinamide (FGAR) and tetrahydrofolate. The protein is Phosphoribosylglycinamide formyltransferase of Haemophilus influenzae (strain ATCC 51907 / DSM 11121 / KW20 / Rd).